The following is a 78-amino-acid chain: MSRVCQVTGKRPMVGHKVSHANNKTKRRFLPNIQNHKFWVEEENRFVTLRLSTKGMRIIDKLGIKAVLDKIRAKGEKI.

Belongs to the bacterial ribosomal protein bL28 family.

This Legionella pneumophila (strain Paris) protein is Large ribosomal subunit protein bL28.